Here is a 341-residue protein sequence, read N- to C-terminus: MATIKDVAKRAGVSTTTVSHVINKTRFVAEETKAAVRAAIKELHYSPSAVARSLKVNHTKSIGLLATSSEAPYFAEIIEAVENSCYAKGYTLVLCNSHNDIGKQRAYLSMLAQKRVDGLLVMCAEYPPELLAMLKDYRSIPMVVMDWGQMHSDFTDTIIDNAFEGGYMAGRYLIERGHRDIGAIPGIQERNTGSGRYLGFLKALKEADITVREEWVVQGDFEPESGYKAMHQILAQKQRPTAVFCGGDIMAMGAICAADELGLRVPQDISVIGYDNVRHARFFTPALTTIHQPKERLGQSAFAMLLDRITSKREDAHVIEVHPTLIERRSVADGPYLDYRR.

The HTH lacI-type domain maps to 2 to 56; that stretch reads ATIKDVAKRAGVSTTTVSHVINKTRFVAEETKAAVRAAIKELHYSPSAVARSLKV. Residues 4 to 23 constitute a DNA-binding region (H-T-H motif); that stretch reads IKDVAKRAGVSTTTVSHVIN. A DNA-binding region spans residues 48 to 56; it reads SAVARSLKV. Hypoxanthine contacts are provided by Tyr73, Arg190, Thr192, Phe221, and Asp275.

As to quaternary structure, homodimer.

It participates in purine metabolism; purine nucleotide biosynthesis [regulation]. In terms of biological role, is the main repressor of the genes involved in the de novo synthesis of purine nucleotides, regulating purB, purC, purEK, purF, purHD, purL, purMN and guaBA expression. PurR is allosterically activated to bind its cognate DNA by binding the purine corepressors, hypoxanthine or guanine, thereby effecting transcription repression. In Pectobacterium carotovorum subsp. carotovorum (strain PC1), this protein is HTH-type transcriptional repressor PurR.